Reading from the N-terminus, the 313-residue chain is Homoserine O-succinyltransferase (313 aa).

Residue cysteine 142 is the Acyl-thioester intermediate of the active site. Residues lysine 163 and serine 192 each contribute to the substrate site. Histidine 235 functions as the Proton acceptor in the catalytic mechanism. Glutamate 237 is an active-site residue. Residue arginine 249 participates in substrate binding.

It belongs to the MetA family.

Its subcellular location is the cytoplasm. It carries out the reaction L-homoserine + succinyl-CoA = O-succinyl-L-homoserine + CoA. The protein operates within amino-acid biosynthesis; L-methionine biosynthesis via de novo pathway; O-succinyl-L-homoserine from L-homoserine: step 1/1. In terms of biological role, transfers a succinyl group from succinyl-CoA to L-homoserine, forming succinyl-L-homoserine. The protein is Homoserine O-succinyltransferase of Aliivibrio fischeri (strain MJ11) (Vibrio fischeri).